The following is a 226-amino-acid chain: NAD(P)H-hydrate epimerase (226 aa).

In terms of domain architecture, YjeF N-terminal spans 10 to 215; that stretch reads AIELDLDLFE…ALQRKYQLNL (206 aa). 58-62 contributes to the (6S)-NADPHX binding site; that stretch reads NNGGD. Residues N59 and D123 each coordinate K(+). (6S)-NADPHX is bound by residues 127–133 and D156; that span reads GFGFKPP. Residue S159 participates in K(+) binding.

It belongs to the NnrE/AIBP family. K(+) serves as cofactor.

The catalysed reaction is (6R)-NADHX = (6S)-NADHX. It catalyses the reaction (6R)-NADPHX = (6S)-NADPHX. Functionally, catalyzes the epimerization of the S- and R-forms of NAD(P)HX, a damaged form of NAD(P)H that is a result of enzymatic or heat-dependent hydration. This is a prerequisite for the S-specific NAD(P)H-hydrate dehydratase to allow the repair of both epimers of NAD(P)HX. This Drosophila pseudoobscura pseudoobscura (Fruit fly) protein is NAD(P)H-hydrate epimerase.